The following is a 483-amino-acid chain: Glycogen synthase (483 aa).

Lysine 15 serves as a coordination point for ADP-alpha-D-glucose.

This sequence belongs to the glycosyltransferase 1 family. Bacterial/plant glycogen synthase subfamily.

The enzyme catalyses [(1-&gt;4)-alpha-D-glucosyl](n) + ADP-alpha-D-glucose = [(1-&gt;4)-alpha-D-glucosyl](n+1) + ADP + H(+). Its pathway is glycan biosynthesis; glycogen biosynthesis. In terms of biological role, synthesizes alpha-1,4-glucan chains using ADP-glucose. The polypeptide is Glycogen synthase (Thioalkalivibrio sulfidiphilus (strain HL-EbGR7)).